Here is a 558-residue protein sequence, read N- to C-terminus: Putative ABC transporter ATP-binding protein SAG1633 (558 aa).

ABC transporter domains lie at 5 to 246 (IEWK…GIRE) and 295 to 527 (LSVQ…THLK). Residues 39 to 46 (GPSGSGKS) and 328 to 335 (GKNGAGKS) contribute to the ATP site.

Belongs to the ABC transporter superfamily.

Its subcellular location is the cell membrane. Its function is as follows. Probably part of an ABC transporter complex. Responsible for energy coupling to the transport system. The chain is Putative ABC transporter ATP-binding protein SAG1633 from Streptococcus agalactiae serotype V (strain ATCC BAA-611 / 2603 V/R).